A 385-amino-acid chain; its full sequence is Mitochondrial protein C2orf69 (385 aa).

Residues 1–24 (MWGFRLLRSPPLLLLLPQLGIGNA) constitute a mitochondrion transit peptide.

Belongs to the C2orf69 family.

The protein localises to the mitochondrion matrix. May play a role in the respiratory chain. This Homo sapiens (Human) protein is Mitochondrial protein C2orf69 (C2orf69).